A 395-amino-acid polypeptide reads, in one-letter code: Tubulin-like protein CetZ1 (395 aa).

Residues Gln-10 to Lys-14, Gly-110 to Gly-112, Glu-142, Asn-169, and Asn-187 contribute to the GTP site.

The protein belongs to the CetZ family.

Its subcellular location is the cytoplasm. In terms of biological role, involved in cell shape control. Essential for the development of a rod-shaped cell type required for efficient swimming. This chain is Tubulin-like protein CetZ1, found in Haloferax volcanii (strain ATCC 29605 / DSM 3757 / JCM 8879 / NBRC 14742 / NCIMB 2012 / VKM B-1768 / DS2) (Halobacterium volcanii).